A 239-amino-acid chain; its full sequence is Fatty acid metabolism regulator protein (239 aa).

Residues 6-74 form the HTH gntR-type domain; the sequence is QSPAGFAEEY…HGKPTKVNNF (69 aa). The segment at residues 34–53 is a DNA-binding region (H-T-H motif); that stretch reads ERELSELIGVTRTTLREVLQ.

In terms of assembly, homodimer.

It is found in the cytoplasm. Functionally, multifunctional regulator of fatty acid metabolism. The chain is Fatty acid metabolism regulator protein from Escherichia fergusonii (strain ATCC 35469 / DSM 13698 / CCUG 18766 / IAM 14443 / JCM 21226 / LMG 7866 / NBRC 102419 / NCTC 12128 / CDC 0568-73).